The primary structure comprises 1214 residues: Formin-D (1214 aa).

In terms of domain architecture, GBD/FH3 spans 10–379; that stretch reads KKEESPQSID…KMNNGESYLD (370 aa). Positions 401–448 form a coiled coil; sequence SGEKAVLIQKEIEDLKKQKKRDQDKLAEKDKLLTKLAKRMRKMEEAIK. The region spanning 457 to 544 is the FH1 domain; that stretch reads NNQIEIESPP…GSGDGIPLPP (88 aa). 2 stretches are compositionally biased toward polar residues: residues 462 to 479 and 518 to 534; these read IESPPDSSTSTPQETTPG and LDTTNQQGSTDASQTEA. 6 disordered regions span residues 462-490, 507-569, 868-948, 1026-1045, 1054-1089, and 1133-1214; these read IESPPDSSTSTPQETTPGGTKVPLKTSPV, APNG…SRPP, PKSV…PLKD, DKSTQRKNEKERKEMEIKKS, LKKIGSPSSSNRILASNESSPTSSTSSVVHQHDDED, and MNLQ…EGEN. Residues 541-554 show a composition bias toward pro residues; sequence PLPPGAPPPPPPPG. Residues 562-1037 enclose the FH2 domain; sequence PQLCSRPPSI…STQRKNEKER (476 aa). The segment covering 868-877 has biased composition (basic and acidic residues); sequence PKSVEPKPDD. Over residues 930–940 the composition is skewed to polar residues; that stretch reads QVNTNSTSDSK. Residues 1019 to 1056 are a coiled coil; the sequence is EIEKSIKDKSTQRKNEKERKEMEIKKSKLEMIHSKLKK. Polar residues predominate over residues 1059–1071; sequence SPSSSNRILASNE. The DAD domain maps to 1065–1095; it reads RILASNESSPTSSTSSVVHQHDDEDEETIKE. Positions 1161 to 1171 are enriched in low complexity; that stretch reads SSTYSSISSIY. A compositionally biased stretch (acidic residues) spans 1174 to 1214; sequence EPLDMSDQEDEDEEEEEDEEEEEEEEEGDDDNDNDEEEGEN. Residues 1176 to 1207 are a coiled coil; the sequence is LDMSDQEDEDEEEEEDEEEEEEEEEGDDDNDN.

Belongs to the formin homology family. Diaphanous subfamily. As to quaternary structure, interacts (via GBD/FH3 domain) with activated Rho-GTPases.

In terms of biological role, formins play an important role in the nucleation of actin and the formation of linear actin filaments. This is Formin-D (forD) from Dictyostelium discoideum (Social amoeba).